The sequence spans 196 residues: Glutathione-specific gamma-glutamylcyclotransferase 1 (196 aa).

15–20 (IFGYGS) is a substrate binding site. Glu95 acts as the Proton acceptor in catalysis.

The protein belongs to the gamma-glutamylcyclotransferase family. ChaC subfamily.

The protein resides in the cytoplasm. The protein localises to the cytosol. Its subcellular location is the golgi apparatus. It localises to the trans-Golgi network. It carries out the reaction glutathione = L-cysteinylglycine + 5-oxo-L-proline. In terms of biological role, catalyzes the cleavage of glutathione into 5-oxo-L-proline and a Cys-Gly dipeptide. Acts specifically on glutathione, but not on other gamma-glutamyl peptides. Glutathione depletion is an important factor for apoptosis initiation and execution. Acts as a pro-apoptotic component of the unfolded protein response pathway by mediating the pro-apoptotic effects of the ATF4-ATF3-DDIT3/CHOP cascade. Negative regulator of Notch signaling pathway involved in embryonic neurogenesis: acts by inhibiting Notch cleavage by furin, maintaining Notch in an immature inactive form, thereby promoting neurogenesis in embryos. The protein is Glutathione-specific gamma-glutamylcyclotransferase 1 of Danio rerio (Zebrafish).